Here is a 141-residue protein sequence, read N- to C-terminus: Hemoglobin subunit beta (141 aa).

Residues 2–141 enclose the Globin domain; that stretch reads HWSEVELHEI…VVDAISKEYH (140 aa). Heme b contacts are provided by His58 and His87.

Belongs to the globin family. As to quaternary structure, heterotetramer of two alpha chains and two beta chains. Red blood cells.

In terms of biological role, involved in oxygen transport from the lung to the various peripheral tissues. The chain is Hemoglobin subunit beta (HBB) from Heterodontus portusjacksoni (Port Jackson shark).